The sequence spans 415 residues: Dihydroorotase (415 aa).

Zn(2+) contacts are provided by histidine 54 and histidine 56. Substrate is bound by residues 56-58 and asparagine 88; that span reads HFR. Residues lysine 136, histidine 169, histidine 217, and aspartate 278 each contribute to the Zn(2+) site. An N6-carboxylysine modification is found at lysine 136. Aspartate 278 is an active-site residue. A substrate-binding site is contributed by histidine 282.

The protein belongs to the metallo-dependent hydrolases superfamily. DHOase family. Class I DHOase subfamily. It depends on Zn(2+) as a cofactor.

The enzyme catalyses (S)-dihydroorotate + H2O = N-carbamoyl-L-aspartate + H(+). The protein operates within pyrimidine metabolism; UMP biosynthesis via de novo pathway; (S)-dihydroorotate from bicarbonate: step 3/3. Catalyzes the reversible cyclization of carbamoyl aspartate to dihydroorotate. The protein is Dihydroorotase of Thermoplasma volcanium (strain ATCC 51530 / DSM 4299 / JCM 9571 / NBRC 15438 / GSS1).